Here is a 339-residue protein sequence, read N- to C-terminus: Dihydroorotase (339 aa).

2 residues coordinate Zn(2+): His12 and His14. Substrate-binding positions include 14–16 (HVR) and Asn40. Positions 94, 133, 167, and 239 each coordinate Zn(2+). Lys94 is modified (N6-carboxylysine). His133 lines the substrate pocket. Residue Asp239 is part of the active site. His243 and Ala255 together coordinate substrate.

This sequence belongs to the metallo-dependent hydrolases superfamily. DHOase family. Class II DHOase subfamily. Homodimer. Zn(2+) is required as a cofactor.

It catalyses the reaction (S)-dihydroorotate + H2O = N-carbamoyl-L-aspartate + H(+). It functions in the pathway pyrimidine metabolism; UMP biosynthesis via de novo pathway; (S)-dihydroorotate from bicarbonate: step 3/3. Functionally, catalyzes the reversible cyclization of carbamoyl aspartate to dihydroorotate. The protein is Dihydroorotase of Helicobacter pylori (strain HPAG1).